An 80-amino-acid polypeptide reads, in one-letter code: Small ribosomal subunit protein bS18 (80 aa).

Belongs to the bacterial ribosomal protein bS18 family. As to quaternary structure, part of the 30S ribosomal subunit. Forms a tight heterodimer with protein bS6.

Binds as a heterodimer with protein bS6 to the central domain of the 16S rRNA, where it helps stabilize the platform of the 30S subunit. The polypeptide is Small ribosomal subunit protein bS18 (Staphylococcus epidermidis (strain ATCC 35984 / DSM 28319 / BCRC 17069 / CCUG 31568 / BM 3577 / RP62A)).